An 857-amino-acid chain; its full sequence is Bifunctional levopimaradiene synthase, chloroplastic (857 aa).

The transit peptide at 1–33 directs the protein to the chloroplast; it reads MALPSSSLSSQIHTGATTQCIPHFHGSLNAGTS. Lys257 serves as a coordination point for substrate. Mg(2+) is bound by residues Asp390 and Asp392. Positions 390 to 393 match the DXDD motif motif; that stretch reads DIDD. Lys477 is a substrate binding site. Asp609, Asp613, Asn753, Thr757, and Glu761 together coordinate Mg(2+). A DDXXD motif motif is present at residues 609 to 613; it reads DDLYD.

This sequence belongs to the terpene synthase family. Tpsd subfamily. The cofactor is Mg(2+).

The protein localises to the plastid. It is found in the chloroplast. It catalyses the reaction (2E,6E,10E)-geranylgeranyl diphosphate = (+)-copalyl diphosphate. It carries out the reaction (+)-copalyl diphosphate = abieta-7,13-diene + diphosphate. The enzyme catalyses (+)-copalyl diphosphate = abieta-8(14),12-diene + diphosphate. The catalysed reaction is (+)-copalyl diphosphate = neoabietadiene + diphosphate. It participates in terpene metabolism; oleoresin biosynthesis. Involved in defensive oleoresin formation in conifers in response to insect attack or other injury. Involved in diterpene (C20) olefins biosynthesis. Bifunctional enzyme that catalyzes two sequential cyclizations of geranylgeranyl diphosphate (GGPP) to levopimaradiene. Levopimaradiene is the major products of the enzyme with abietadiene and neoabietadiene. No activity with farnesyl diphosphate (FPP) as substrate. This is Bifunctional levopimaradiene synthase, chloroplastic from Pinus contorta (Shore pine).